We begin with the raw amino-acid sequence, 107 residues long: Small ribosomal subunit protein uS15 (107 aa).

K27 carries the post-translational modification N6-acetyllysine; alternate. The residue at position 27 (K27) is an N6-succinyllysine; alternate. A Glycyl lysine isopeptide (Lys-Gly) (interchain with G-Cter in ubiquitin) cross-link involves residue K27. S30 carries the post-translational modification Phosphoserine. K34 bears the N6-succinyllysine mark. Y38 is modified (phosphotyrosine). Residue K43 forms a Glycyl lysine isopeptide (Lys-Gly) (interchain with G-Cter in SUMO2) linkage.

The protein belongs to the universal ribosomal protein uS15 family. In terms of assembly, component of the small ribosomal subunit. Part of the small subunit (SSU) processome, composed of more than 70 proteins and the RNA chaperone small nucleolar RNA (snoRNA) U3. In terms of processing, ubiquitinated at Lys-27 by RNF14 and RNF25 in response to ribosome collisions (ribosome stalling).

It localises to the cytoplasm. The protein localises to the nucleus. Its subcellular location is the nucleolus. In terms of biological role, component of the small ribosomal subunit. The ribosome is a large ribonucleoprotein complex responsible for the synthesis of proteins in the cell. Part of the small subunit (SSU) processome, first precursor of the small eukaryotic ribosomal subunit. During the assembly of the SSU processome in the nucleolus, many ribosome biogenesis factors, an RNA chaperone and ribosomal proteins associate with the nascent pre-rRNA and work in concert to generate RNA folding, modifications, rearrangements and cleavage as well as targeted degradation of pre-ribosomal RNA by the RNA exosome. The protein is Small ribosomal subunit protein uS15 (RPS13) of Sus scrofa (Pig).